The sequence spans 178 residues: Histone H3-like centromeric protein CENH3 (178 aa).

The segment at 1 to 81 (MARTKHRVTR…GSQKKSYRYR (81 aa)) is disordered. The residue at position 5 (K5) is an N6,N6,N6-trimethyllysine; alternate. K5 is subject to N6,N6-dimethyllysine; alternate. Residue K5 is modified to N6-methyllysine; alternate. Position 11 is a phosphoserine (S11). A compositionally biased stretch (low complexity) spans 16-36 (QTDAAGASSSQAAGPTTTPTR). The segment covering 43-56 (DNTQQTNPTTSPAT) has biased composition (polar residues). N6-methyllysine; alternate is present on residues K63 and K75. At K63 the chain carries N6-acetyllysine; alternate. K75 is modified (N6,N6,N6-trimethyllysine; alternate). The residue at position 75 (K75) is an N6,N6-dimethyllysine; alternate.

Belongs to the histone H3 family. As to quaternary structure, forms a nucleosome-like histone octamer containing two molecules each of H2A, H2B, CENH3 and H4 assembled in one CENH3-H4 heterotetramer and two H2A-H2B heterodimers. Interacts with ORTH2.

The protein localises to the chromosome. Its subcellular location is the centromere. The protein resides in the kinetochore. Its function is as follows. Histone H3-like variant which exclusively replaces conventional H3 in the nucleosome core of centromeric chromatin at the inner plate of the kinetochore. Required for recruitment and assembly of kinetochore proteins, mitotic progression and chromosome segregation. May serve as an epigenetic mark that propagates centromere identity through replication and cell division. In Arabidopsis thaliana (Mouse-ear cress), this protein is Histone H3-like centromeric protein CENH3.